A 239-amino-acid polypeptide reads, in one-letter code: Geranylgeranylglyceryl phosphate synthase (239 aa).

Residues D18 and S45 each coordinate Mg(2+). Residues 166–172, 197–198, and 219–220 contribute to the sn-glycerol 1-phosphate site; these read YLEAGSG, GG, and GT.

The protein belongs to the GGGP/HepGP synthase family. Group II subfamily. The cofactor is Mg(2+).

It is found in the cytoplasm. The catalysed reaction is sn-glycerol 1-phosphate + (2E,6E,10E)-geranylgeranyl diphosphate = sn-3-O-(geranylgeranyl)glycerol 1-phosphate + diphosphate. It participates in membrane lipid metabolism; glycerophospholipid metabolism. Functionally, prenyltransferase that catalyzes the transfer of the geranylgeranyl moiety of geranylgeranyl diphosphate (GGPP) to the C3 hydroxyl of sn-glycerol-1-phosphate (G1P). This reaction is the first ether-bond-formation step in the biosynthesis of archaeal membrane lipids. In Pyrobaculum aerophilum (strain ATCC 51768 / DSM 7523 / JCM 9630 / CIP 104966 / NBRC 100827 / IM2), this protein is Geranylgeranylglyceryl phosphate synthase.